Consider the following 336-residue polypeptide: Biotin synthase (336 aa).

Residues 52-279 (KAIQLSTLMS…KSYVRLSAGR (228 aa)) enclose the Radical SAM core domain. Cysteine 67, cysteine 71, and cysteine 74 together coordinate [4Fe-4S] cluster. [2Fe-2S] cluster-binding residues include cysteine 111, cysteine 142, cysteine 202, and arginine 274.

The protein belongs to the radical SAM superfamily. Biotin synthase family. In terms of assembly, homodimer. [4Fe-4S] cluster serves as cofactor. Requires [2Fe-2S] cluster as cofactor.

The catalysed reaction is (4R,5S)-dethiobiotin + (sulfur carrier)-SH + 2 reduced [2Fe-2S]-[ferredoxin] + 2 S-adenosyl-L-methionine = (sulfur carrier)-H + biotin + 2 5'-deoxyadenosine + 2 L-methionine + 2 oxidized [2Fe-2S]-[ferredoxin]. It participates in cofactor biosynthesis; biotin biosynthesis; biotin from 7,8-diaminononanoate: step 2/2. Its function is as follows. Catalyzes the conversion of dethiobiotin (DTB) to biotin by the insertion of a sulfur atom into dethiobiotin via a radical-based mechanism. This Pasteurella multocida (strain Pm70) protein is Biotin synthase.